We begin with the raw amino-acid sequence, 387 residues long: Phosphoglycerate kinase (387 aa).

Residues 21 to 23 (DLN), R36, 59 to 62 (HLGR), R113, and R146 each bind substrate. Residues K197, E314, and 340-343 (GGDT) contribute to the ATP site.

Belongs to the phosphoglycerate kinase family. As to quaternary structure, monomer.

It localises to the cytoplasm. The catalysed reaction is (2R)-3-phosphoglycerate + ATP = (2R)-3-phospho-glyceroyl phosphate + ADP. The protein operates within carbohydrate degradation; glycolysis; pyruvate from D-glyceraldehyde 3-phosphate: step 2/5. The sequence is that of Phosphoglycerate kinase from Photorhabdus laumondii subsp. laumondii (strain DSM 15139 / CIP 105565 / TT01) (Photorhabdus luminescens subsp. laumondii).